The following is a 114-amino-acid chain: Lymphotactin (114 aa).

The signal sequence occupies residues 1 to 21; it reads MRLLILALLGICSLTAYIVEG. The cysteines at positions 32 and 69 are disulfide-linked. The interval 91 to 114 is disordered; the sequence is RNNMIQTKPTGTQQSTNTAVTLTG.

It belongs to the intercrine gamma family. Highest level in spleen, lower in peripheral leukocytes and very low levels in lung, colon and small intestine.

The protein localises to the secreted. Chemotactic activity for lymphocytes but not for monocytes or neutrophils. In thymus, mediates medullary accumulation of thymic dendritic cells and contributes to regulatoy T cell development, playing a role in self-tolerance establishment. This Homo sapiens (Human) protein is Lymphotactin (XCL1).